Here is a 332-residue protein sequence, read N- to C-terminus: DNA-directed RNA polymerase subunit alpha (332 aa).

An alpha N-terminal domain (alpha-NTD) region spans residues Met-1 to Glu-232. Residues Ile-246–Ala-332 are alpha C-terminal domain (alpha-CTD).

It belongs to the RNA polymerase alpha chain family. In terms of assembly, homodimer. The RNAP catalytic core consists of 2 alpha, 1 beta, 1 beta' and 1 omega subunit. When a sigma factor is associated with the core the holoenzyme is formed, which can initiate transcription.

It carries out the reaction RNA(n) + a ribonucleoside 5'-triphosphate = RNA(n+1) + diphosphate. DNA-dependent RNA polymerase catalyzes the transcription of DNA into RNA using the four ribonucleoside triphosphates as substrates. This chain is DNA-directed RNA polymerase subunit alpha, found in Nitrosococcus oceani (strain ATCC 19707 / BCRC 17464 / JCM 30415 / NCIMB 11848 / C-107).